The chain runs to 225 residues: Thymidylate kinase (225 aa).

Position 9-16 (9-16) interacts with ATP; sequence GIEGCGKT.

This sequence belongs to the thymidylate kinase family.

It carries out the reaction dTMP + ATP = dTDP + ADP. Phosphorylation of dTMP to form dTDP in both de novo and salvage pathways of dTTP synthesis. This Geobacter sp. (strain M21) protein is Thymidylate kinase.